A 324-amino-acid polypeptide reads, in one-letter code: Elongation factor P--(R)-beta-lysine ligase (324 aa).

75-77 (SPE) lines the substrate pocket. ATP is bound by residues 99–101 (RNQ) and asparagine 108. Residue tyrosine 117 coordinates substrate. ATP is bound at residue 243–244 (EL). Glutamate 250 is a substrate binding site. Glycine 299 is a binding site for ATP.

The protein belongs to the class-II aminoacyl-tRNA synthetase family. EpmA subfamily. As to quaternary structure, homodimer.

The catalysed reaction is D-beta-lysine + L-lysyl-[protein] + ATP = N(6)-((3R)-3,6-diaminohexanoyl)-L-lysyl-[protein] + AMP + diphosphate + H(+). Its function is as follows. With EpmB is involved in the beta-lysylation step of the post-translational modification of translation elongation factor P (EF-P). Catalyzes the ATP-dependent activation of (R)-beta-lysine produced by EpmB, forming a lysyl-adenylate, from which the beta-lysyl moiety is then transferred to the epsilon-amino group of a conserved specific lysine residue in EF-P. In Buchnera aphidicola subsp. Schizaphis graminum (strain Sg), this protein is Elongation factor P--(R)-beta-lysine ligase.